Here is a 300-residue protein sequence, read N- to C-terminus: Serine/arginine-rich splicing factor SR34A (300 aa).

Residues 7-82 (RSIYVGNLPG…CRLRVELAHG (76 aa)) enclose the RRM 1 domain. 2 disordered regions span residues 81-110 (HGGR…GGGG) and 198-300 (YESS…EGSV). Gly residues predominate over residues 94–110 (GYGGGGSGYGGGGGGGG). In terms of domain architecture, RRM 2 spans 122-200 (FRVIVRGLPS…GFIRVKKYES (79 aa)). Over residues 203 to 239 (SRSRSPSRSRSRSRSRSRSRGRGRSHSRSRSLSRSKS) the composition is skewed to basic residues. 8 positions are modified to phosphoserine: Ser-207, Ser-209, Ser-231, Ser-233, Ser-239, Ser-259, Ser-275, and Ser-285. The segment covering 253-262 (SRSISKSRSP) has biased composition (low complexity). Basic residues predominate over residues 275 to 287 (SRSKSRSRSRSRS).

The protein belongs to the splicing factor SR family. SR subfamily. In terms of assembly, component of the spliceosome.

It is found in the nucleus speckle. It localises to the nucleus. Its subcellular location is the nucleoplasm. Functionally, probably involved in intron recognition and spliceosome assembly. This chain is Serine/arginine-rich splicing factor SR34A (SR34A), found in Arabidopsis thaliana (Mouse-ear cress).